We begin with the raw amino-acid sequence, 373 residues long: Queuine tRNA-ribosyltransferase (373 aa).

Catalysis depends on Asp90, which acts as the Proton acceptor. Residues 90–94 (DSGGF), Asp144, Gln193, and Gly220 contribute to the substrate site. The segment at 251–257 (GVGTPED) is RNA binding. The Nucleophile role is filled by Asp270. The interval 275-279 (TRNAR) is RNA binding; important for wobble base 34 recognition. 4 residues coordinate Zn(2+): Cys308, Cys310, Cys313, and His339.

Belongs to the queuine tRNA-ribosyltransferase family. Homodimer. Within each dimer, one monomer is responsible for RNA recognition and catalysis, while the other monomer binds to the replacement base PreQ1. It depends on Zn(2+) as a cofactor.

The enzyme catalyses 7-aminomethyl-7-carbaguanine + guanosine(34) in tRNA = 7-aminomethyl-7-carbaguanosine(34) in tRNA + guanine. The protein operates within tRNA modification; tRNA-queuosine biosynthesis. Catalyzes the base-exchange of a guanine (G) residue with the queuine precursor 7-aminomethyl-7-deazaguanine (PreQ1) at position 34 (anticodon wobble position) in tRNAs with GU(N) anticodons (tRNA-Asp, -Asn, -His and -Tyr). Catalysis occurs through a double-displacement mechanism. The nucleophile active site attacks the C1' of nucleotide 34 to detach the guanine base from the RNA, forming a covalent enzyme-RNA intermediate. The proton acceptor active site deprotonates the incoming PreQ1, allowing a nucleophilic attack on the C1' of the ribose to form the product. After dissociation, two additional enzymatic reactions on the tRNA convert PreQ1 to queuine (Q), resulting in the hypermodified nucleoside queuosine (7-(((4,5-cis-dihydroxy-2-cyclopenten-1-yl)amino)methyl)-7-deazaguanosine). This Campylobacter jejuni (strain RM1221) protein is Queuine tRNA-ribosyltransferase.